The primary structure comprises 128 residues: Sulfurtransferase TusD (128 aa).

Cys-78 (cysteine persulfide intermediate) is an active-site residue.

This sequence belongs to the DsrE/TusD family. In terms of assembly, heterohexamer, formed by a dimer of trimers. The hexameric TusBCD complex contains 2 copies each of TusB, TusC and TusD. The TusBCD complex interacts with TusE.

Its subcellular location is the cytoplasm. Part of a sulfur-relay system required for 2-thiolation of 5-methylaminomethyl-2-thiouridine (mnm(5)s(2)U) at tRNA wobble positions. Accepts sulfur from TusA and transfers it in turn to TusE. This is Sulfurtransferase TusD from Escherichia coli O157:H7.